Here is a 304-residue protein sequence, read N- to C-terminus: Oxygen-dependent coproporphyrinogen-III oxidase (304 aa).

Residue Ser94 coordinates substrate. Residues His98 and His108 each contribute to the a divalent metal cation site. His108 acts as the Proton donor in catalysis. 110–112 (NVR) provides a ligand contact to substrate. His147 and His177 together coordinate a divalent metal cation. An important for dimerization region spans residues 242 to 277 (YVEFNLVYDRGTLFGLQTGGRTESILMSMPPLVRWE). 260 to 262 (GGR) contacts substrate.

Belongs to the aerobic coproporphyrinogen-III oxidase family. In terms of assembly, homodimer. A divalent metal cation serves as cofactor.

It is found in the cytoplasm. It carries out the reaction coproporphyrinogen III + O2 + 2 H(+) = protoporphyrinogen IX + 2 CO2 + 2 H2O. The protein operates within porphyrin-containing compound metabolism; protoporphyrin-IX biosynthesis; protoporphyrinogen-IX from coproporphyrinogen-III (O2 route): step 1/1. In terms of biological role, involved in the heme biosynthesis. Catalyzes the aerobic oxidative decarboxylation of propionate groups of rings A and B of coproporphyrinogen-III to yield the vinyl groups in protoporphyrinogen-IX. This is Oxygen-dependent coproporphyrinogen-III oxidase from Shewanella pealeana (strain ATCC 700345 / ANG-SQ1).